Here is a 590-residue protein sequence, read N- to C-terminus: Acyl-CoA ligase sidI (590 aa).

The short motif at 6–14 is the PTS2-type peroxisomal targeting signal element; it reads RLQQTLSHL. ATP contacts are provided by residues 220–228, 359–364, aspartate 449, and arginine 464; these read TSGSTGNPK and SSYGLT. Threonine 364 is a binding site for substrate. Residues 472–474 and 543–545 each bind CoA; these read GGE and YFF. ATP is bound at residue lysine 563.

Belongs to the ATP-dependent AMP-binding enzyme family.

The protein resides in the peroxisome. It functions in the pathway siderophore biosynthesis. Acyl-CoA ligase; part of the siderophore biosynthetic pathway. Aspergillus fumigatus produces 4 types of siderophores, low-molecular-mass iron chelators, including excreted fusarinine C (FsC) and triacetylfusarinine C (TAFC) for iron uptake and intacellular ferricrocin (FC) for hyphal and hydroxyferricrocin (HFC) for conidial iron distribution and storage. TAFC consists of 3 N(2)-acetyl-N(5)-anhydromevalonyl-N(5)-hydroxyornithine residues cyclically linked by ester bonds; FC is a cyclic hexapeptide with the structure Gly-Ser-Gly-(N(5)-acetyl-N(5)-hydroxyornithine)x3. The biosynthesis of all four siderophores depends on the hydroxylation of ornithine, catalyzed by the monooxygenase sidA. Subsequently, the pathways for biosynthesis of extra- and intracellular siderophores split. For biosynthesis of extracellular siderophores, the transacylase sidF transfers anhydromevalonyl to N(5)-hydroxyornithine. The required anhydromevalonyl-CoA moiety is derived from mevalonate by CoA ligation and dehydration catalyzed by sidI and sidH respectively. The acetylation of N(5)-hydroxyornithine for FC biosynthesis involves the constitutively expressed sidL. FC is hydroxylated to HFC by an as yet uncharacterized enzyme during conidiation. Assembly of fusarinine C (FsC) and FC is catalyzed by two different nonribosomal peptide synthetases (NRPS), sidD and sidC respectively. Subsequently, sidG catalyzes N2-acetylation of FsC for forming TAFC. Both extra- and intracellular siderophores are crucial for growth during iron limitation and virulence. This is Acyl-CoA ligase sidI from Aspergillus fumigatus (strain ATCC MYA-4609 / CBS 101355 / FGSC A1100 / Af293) (Neosartorya fumigata).